The chain runs to 130 residues: UPF0225 protein CE1570 (130 aa).

It belongs to the UPF0225 family.

This Corynebacterium efficiens (strain DSM 44549 / YS-314 / AJ 12310 / JCM 11189 / NBRC 100395) protein is UPF0225 protein CE1570.